Here is a 238-residue protein sequence, read N- to C-terminus: Zwei Ig domain protein zig-2 (238 aa).

An N-terminal signal peptide occupies residues 1–17 (MLKFTAISFVLLNAAES). One can recognise an Ig-like C2-type 1 domain in the interval 31-130 (PLLKFTRTPN…NGLTKLEHVA (100 aa)). Residues N40 and N43 are each glycosylated (N-linked (GlcNAc...) asparagine). Residues C54 and C117 are joined by a disulfide bond. N-linked (GlcNAc...) asparagine glycosylation is found at N137, N206, and N216. The region spanning 149–230 (PFISMTVDFR…NHFGETTAIT (82 aa)) is the Ig-like C2-type 2 domain. The cysteines at positions 170 and 217 are disulfide-linked.

In terms of tissue distribution, expressed in PVT neurons and weakly in some head neurons.

The protein resides in the secreted. Functionally, probably not involved in maintaining the position of ASI and ASH head neuron cell bodies and ventral nerve cord axons of PVQ, PVP, RMEV, AVK and HSN neurons. The protein is Zwei Ig domain protein zig-2 of Caenorhabditis elegans.